We begin with the raw amino-acid sequence, 58 residues long: Large ribosomal subunit protein uL30 (58 aa).

This sequence belongs to the universal ribosomal protein uL30 family. In terms of assembly, part of the 50S ribosomal subunit.

In Pseudomonas putida (strain W619), this protein is Large ribosomal subunit protein uL30.